We begin with the raw amino-acid sequence, 702 residues long: Polyribonucleotide nucleotidyltransferase 2 (702 aa).

Positions 483 and 489 each coordinate Mg(2+). Residues 550 to 609 (PQVTKLKVHPDKVREVIGAGGKVINKIIDETGVKINIENDGTIYIAAPDQESARVALEMI) enclose the KH domain. In terms of domain architecture, S1 motif spans 619–687 (GEVYTGKVIK…PQGKIGLSRK (69 aa)).

The protein belongs to the polyribonucleotide nucleotidyltransferase family. Mg(2+) is required as a cofactor.

It is found in the cytoplasm. The enzyme catalyses RNA(n+1) + phosphate = RNA(n) + a ribonucleoside 5'-diphosphate. Involved in mRNA degradation. Catalyzes the phosphorolysis of single-stranded polyribonucleotides processively in the 3'- to 5'-direction. This Alkaliphilus metalliredigens (strain QYMF) protein is Polyribonucleotide nucleotidyltransferase 2.